Consider the following 657-residue polypeptide: Tyramine beta-hydroxylase (657 aa).

Residues 77–97 (VALLFLLVAYCGGVVHAGEIV) form a helical membrane-spanning segment. The region spanning 103-214 (TNVTVKWHTD…GTTQFYIAAS (112 aa)) is the DOMON domain. N-linked (GlcNAc...) asparagine glycans are attached at residues Asn-104 and Asn-143. Tyr-278 is an active-site residue. Cystine bridges form between Cys-280–Cys-330 and Cys-319–Cys-342. Cu(2+) contacts are provided by His-312 and His-313. Positions 380, 458, 460, and 533 each coordinate Cu(2+). Cystine bridges form between Cys-437-Cys-549, Cys-441-Cys-606, and Cys-512-Cys-534. The active site involves His-458. An N-linked (GlcNAc...) asparagine glycan is attached at Asn-555.

The protein belongs to the copper type II ascorbate-dependent monooxygenase family. Cu(2+) serves as cofactor. Present in synaptic regions of RIC interneurons. Present in gonadal sheath cells of hermaphrodites (at protein level).

The protein resides in the membrane. The enzyme catalyses tyramine + L-ascorbate + O2 = (R)-octopamine + L-dehydroascorbate + H2O. In terms of biological role, required for the conversion of tyramine to octopamine, a precursor of octapamine but probably itself a neurotransmitter. Involved in the regulation of egg laying, which is inhibited by tyramine. Due to its involvement in octopamine biosynthesis, also required for crtc-1-dependent regulation of AMPK-mediated longevity. The chain is Tyramine beta-hydroxylase from Caenorhabditis elegans.